We begin with the raw amino-acid sequence, 172 residues long: Small ribosomal subunit protein uS5 (172 aa).

In terms of domain architecture, S5 DRBM spans 17-80; that stretch reads LREKMISVNR…EQARRNMFKV (64 aa).

This sequence belongs to the universal ribosomal protein uS5 family. In terms of assembly, part of the 30S ribosomal subunit. Contacts proteins S4 and S8.

Its function is as follows. With S4 and S12 plays an important role in translational accuracy. Located at the back of the 30S subunit body where it stabilizes the conformation of the head with respect to the body. The polypeptide is Small ribosomal subunit protein uS5 (Burkholderia pseudomallei (strain 1106a)).